A 577-amino-acid polypeptide reads, in one-letter code: MDRAVSQVALENDEREAKNTWRLIFRIAILFLTVVTLAISVASLLYSMGASTPSDLVGIPTRISRAEEKITSTLGSNQDVVDRIYKQVALESPLALLNTETTIMNAITSLSYQINGAANNSGWGAPIHDPDYIGGIGKELIVDDASDVTSFYPSAFQEHLNFIPAPTTGSGCTRIPSFDMSATHYCYTHNVILSGCRDHSHSYQYLALGVLRTSATGRVFFSTLRSINLDDTQNRKSCSVSATPLGCDMLCSKATETEEEDYNSAVPTRMVHGRLGFDGQYHEKDLDVTTLFGDWVANYPGVGGGSFIDSRVWFSVYGGLKPNSPSDTVQEGKYVIYKRYNDTCPDEQDYQIRMAKSSYKPGRFGGKRIQQAILSIKVSTSLGEDPVLTVPPNTVTLMGAEGRILTVGTSHFLYQRGSSYFSPALLYPMTVSNKTATLHSPYTFNAFTRPGSIPCQASARCPNSCVTGVYTDPYPLIFYRNHTLRGVFGTMLDGEQARLNPASAVFDSTSRSRITRVSSSSIKAAYTTSTCFKVVKTNKTYCLSIAEISNTLFGEFRIVPLLVEILKDDGVREARSG.

The Intravirion portion of the chain corresponds to 1-26 (MDRAVSQVALENDEREAKNTWRLIFR). A helical transmembrane segment spans residues 27–47 (IAILFLTVVTLAISVASLLYS). Over 48-577 (MGASTPSDLV…DDGVREARSG (530 aa)) the chain is Virion surface. Residues 124 to 152 (GAPIHDPDYIGGIGKELIVDDASDVTSFY) are important for interaction with fusion/F protein. Residues Asn-341, Asn-433, Asn-481, and Asn-538 are each glycosylated (N-linked (GlcNAc...) asparagine; by host).

This sequence belongs to the paramyxoviruses hemagglutinin-neuraminidase family. In terms of assembly, homotetramer; composed of disulfide-linked homodimers. Interacts with F protein trimer. Interacts with host CG-1B; this interaction inhibits viral adsorption and replication rather than internalization.

Its subcellular location is the virion membrane. It is found in the host cell membrane. It carries out the reaction Hydrolysis of alpha-(2-&gt;3)-, alpha-(2-&gt;6)-, alpha-(2-&gt;8)- glycosidic linkages of terminal sialic acid residues in oligosaccharides, glycoproteins, glycolipids, colominic acid and synthetic substrates.. In terms of biological role, mediates the viral entry into the host cell together with fusion/F protein. Attaches the virus to sialic acid-containing cell receptors and thereby initiates infection. Binding of HN protein to the receptor induces a conformational change that allows the F protein to trigger virion/cell membranes fusion. Its function is as follows. Neuraminidase activity ensures the efficient spread of the virus by dissociating the mature virions from the neuraminic acid containing glycoproteins. In Gallus gallus (Chicken), this protein is Hemagglutinin-neuraminidase (HN).